We begin with the raw amino-acid sequence, 295 residues long: uncharacterized protein (295 aa).

A Resolvase/invertase-type recombinase catalytic domain is found at 151-290; the sequence is RTAVCARLSS…RAVAAAARAG (140 aa). Residue Ser-159 is the O-(5'-phospho-DNA)-serine intermediate of the active site.

This is an uncharacterized protein from Mycobacterium bovis (strain ATCC BAA-935 / AF2122/97).